Reading from the N-terminus, the 234-residue chain is Carboxy-S-adenosyl-L-methionine synthase (234 aa).

S-adenosyl-L-methionine is bound by residues tyrosine 35, 60 to 62 (GSS), 83 to 84 (DN), asparagine 124, and arginine 191.

The protein belongs to the class I-like SAM-binding methyltransferase superfamily. Cx-SAM synthase family. In terms of assembly, homodimer.

The enzyme catalyses prephenate + S-adenosyl-L-methionine = carboxy-S-adenosyl-L-methionine + 3-phenylpyruvate + H2O. Its function is as follows. Catalyzes the conversion of S-adenosyl-L-methionine (SAM) to carboxy-S-adenosyl-L-methionine (Cx-SAM). The protein is Carboxy-S-adenosyl-L-methionine synthase of Nautilia profundicola (strain ATCC BAA-1463 / DSM 18972 / AmH).